Consider the following 426-residue polypeptide: 3-phosphoshikimate 1-carboxyvinyltransferase (426 aa).

3-phosphoshikimate contacts are provided by lysine 22, serine 23, and arginine 27. Lysine 22 contributes to the phosphoenolpyruvate binding site. Residues glycine 96 and arginine 124 each contribute to the phosphoenolpyruvate site. 3-phosphoshikimate contacts are provided by serine 170, serine 171, glutamine 172, serine 198, aspartate 314, asparagine 337, and lysine 341. Glutamine 172 is a phosphoenolpyruvate binding site. Aspartate 314 acts as the Proton acceptor in catalysis. Residues arginine 345, arginine 387, and lysine 412 each coordinate phosphoenolpyruvate.

This sequence belongs to the EPSP synthase family. In terms of assembly, monomer.

It is found in the cytoplasm. The catalysed reaction is 3-phosphoshikimate + phosphoenolpyruvate = 5-O-(1-carboxyvinyl)-3-phosphoshikimate + phosphate. The protein operates within metabolic intermediate biosynthesis; chorismate biosynthesis; chorismate from D-erythrose 4-phosphate and phosphoenolpyruvate: step 6/7. Its function is as follows. Catalyzes the transfer of the enolpyruvyl moiety of phosphoenolpyruvate (PEP) to the 5-hydroxyl of shikimate-3-phosphate (S3P) to produce enolpyruvyl shikimate-3-phosphate and inorganic phosphate. The sequence is that of 3-phosphoshikimate 1-carboxyvinyltransferase from Shewanella baltica (strain OS195).